The sequence spans 721 residues: Protein quick-to-court (721 aa).

Disordered regions lie at residues 1 to 42 (MMTS…RIPH), 143 to 210 (VGNS…ASVA), 360 to 379 (SSPEERSASSDAVTVREAEL), 393 to 428 (DEGNAKGSPRHLSRQQQQQANHSLQAMQMSAEMQSS), and 441 to 471 (SSVHSKDSQTQSEACGTATPDGEADVGCGAG). Basic and acidic residues predominate over residues 17 to 31 (QVQREKDNDSAEDSH). Over residues 161-201 (NGGSDISSSGTSSSSSNNKESSPRTTRTPRTPQTPQTPQTP) the composition is skewed to low complexity. The span at 362–379 (PEERSASSDAVTVREAEL) shows a compositional bias: basic and acidic residues. Over residues 406-420 (RQQQQQANHSLQAMQ) the composition is skewed to low complexity. Polar residues predominate over residues 441-454 (SSVHSKDSQTQSEA). Residues 511 to 569 (KRSHNDKVEALLQKLAECNTRYSDMVPDYEQAKQRIRELEKQLEDLQRKLIEHEEKQNK) adopt a coiled-coil conformation. The region spanning 668–716 (HVDPEVTLQFLKSAIFYFLTDKENSQGHLQAIESILEFTDAEKQKISAA) is the GRIP domain.

In terms of tissue distribution, expressed in the third antennal segment and the maxillary palp, with increased expression near the cuticle of both olfactory organs. Also detected in the second antenna segment. In the brain, expressed in the central nervous system, with high levels of expression in the visual system including the retina and optic lobe, and uniform expression in the cortex. Detected in the thorax and abdomen, with increased expression in the ventral ganglion. In males, detected in the reproductive tract including the ejaculatory bulb and testis.

In terms of biological role, in adult males, modulates sexual behavior by playing a role in sex discrimination and maintaining normal levels of sexual activity towards both males and females. This Drosophila melanogaster (Fruit fly) protein is Protein quick-to-court.